Reading from the N-terminus, the 47-residue chain is Sperm protamine P1 (47 aa).

It belongs to the protamine P1 family. In terms of tissue distribution, testis.

The protein localises to the nucleus. It is found in the chromosome. Functionally, protamines substitute for histones in the chromatin of sperm during the haploid phase of spermatogenesis. They compact sperm DNA into a highly condensed, stable and inactive complex. This Myotis daubentonii (Daubenton's bat) protein is Sperm protamine P1 (PRM1).